The primary structure comprises 500 residues: NAD(P)H-quinone oxidoreductase chain 4, chloroplastic (500 aa).

The next 14 membrane-spanning stretches (helical) occupy residues 4-24, 37-57, 87-107, 113-130, 134-154, 167-187, 207-227, 242-262, 272-292, 305-325, 330-350, 386-406, 411-431, and 462-482; these read FPWL…IFFL, ICIC…HFQL, IGPI…AWPV, LFHF…GSFS, LLLF…LLSM, FILY…GIGL, IALE…KSPI, HYST…YGLV, AHSL…IYAA, IAYS…SITD, GAIL…FLAG, LALP…GIIT, FLMA…LTPI, and LFVS…PDFL.

It belongs to the complex I subunit 4 family.

It localises to the plastid. Its subcellular location is the chloroplast thylakoid membrane. It carries out the reaction a plastoquinone + NADH + (n+1) H(+)(in) = a plastoquinol + NAD(+) + n H(+)(out). It catalyses the reaction a plastoquinone + NADPH + (n+1) H(+)(in) = a plastoquinol + NADP(+) + n H(+)(out). The sequence is that of NAD(P)H-quinone oxidoreductase chain 4, chloroplastic from Carica papaya (Papaya).